A 215-amino-acid polypeptide reads, in one-letter code: Phosphatidylserine decarboxylase proenzyme (215 aa).

Serine 181 functions as the Schiff-base intermediate with substrate; via pyruvic acid in the catalytic mechanism. Position 181 is a pyruvic acid (Ser); by autocatalysis (serine 181).

This sequence belongs to the phosphatidylserine decarboxylase family. PSD-A subfamily. As to quaternary structure, heterodimer of a large membrane-associated beta subunit and a small pyruvoyl-containing alpha subunit. Pyruvate is required as a cofactor. Post-translationally, is synthesized initially as an inactive proenzyme. Formation of the active enzyme involves a self-maturation process in which the active site pyruvoyl group is generated from an internal serine residue via an autocatalytic post-translational modification. Two non-identical subunits are generated from the proenzyme in this reaction, and the pyruvate is formed at the N-terminus of the alpha chain, which is derived from the carboxyl end of the proenzyme. The post-translation cleavage follows an unusual pathway, termed non-hydrolytic serinolysis, in which the side chain hydroxyl group of the serine supplies its oxygen atom to form the C-terminus of the beta chain, while the remainder of the serine residue undergoes an oxidative deamination to produce ammonia and the pyruvoyl prosthetic group on the alpha chain.

Its subcellular location is the cell membrane. The enzyme catalyses a 1,2-diacyl-sn-glycero-3-phospho-L-serine + H(+) = a 1,2-diacyl-sn-glycero-3-phosphoethanolamine + CO2. It participates in phospholipid metabolism; phosphatidylethanolamine biosynthesis; phosphatidylethanolamine from CDP-diacylglycerol: step 2/2. Its function is as follows. Catalyzes the formation of phosphatidylethanolamine (PtdEtn) from phosphatidylserine (PtdSer). The polypeptide is Phosphatidylserine decarboxylase proenzyme (Polynucleobacter asymbioticus (strain DSM 18221 / CIP 109841 / QLW-P1DMWA-1) (Polynucleobacter necessarius subsp. asymbioticus)).